A 136-amino-acid chain; its full sequence is Pterin-4-alpha-carbinolamine dehydratase 2 (136 aa).

An N6-acetyllysine; alternate mark is found at Lys120, Lys124, and Lys131. 3 positions are modified to N6-succinyllysine; alternate: Lys120, Lys124, and Lys131.

It belongs to the pterin-4-alpha-carbinolamine dehydratase family. Homotetramer. Interacts with DYRK1B.

It carries out the reaction (4aS,6R)-4a-hydroxy-L-erythro-5,6,7,8-tetrahydrobiopterin = (6R)-L-erythro-6,7-dihydrobiopterin + H2O. In terms of biological role, involved in tetrahydrobiopterin biosynthesis. Seems to both prevent the formation of 7-pterins and accelerate the formation of quinonoid-BH2. Its function is as follows. Regulates the dimerization of homeodomain protein HNF-1-alpha and enhances its transcriptional activity. The sequence is that of Pterin-4-alpha-carbinolamine dehydratase 2 (Pcbd2) from Mus musculus (Mouse).